A 379-amino-acid polypeptide reads, in one-letter code: L-lactate dehydrogenase (379 aa).

Residues 1–379 (MIISASTDYR…ITSDLLVKER (379 aa)) form the FMN hydroxy acid dehydrogenase domain. Tyrosine 24 lines the substrate pocket. 2 residues coordinate FMN: serine 106 and glutamine 127. Position 129 (tyrosine 129) interacts with substrate. Threonine 155 is a binding site for FMN. Arginine 164 is a binding site for substrate. Lysine 251 is a binding site for FMN. The active-site Proton acceptor is the histidine 275. Arginine 278 provides a ligand contact to substrate. 306–330 (DSGIRTGLDVVRMLALGADTVLLGR) lines the FMN pocket.

It belongs to the FMN-dependent alpha-hydroxy acid dehydrogenase family. As to quaternary structure, homotetramer. FMN serves as cofactor.

It localises to the cell inner membrane. The enzyme catalyses (S)-lactate + A = pyruvate + AH2. Its function is as follows. Catalyzes the conversion of L-lactate to pyruvate. Is coupled to the respiratory chain. In Ectopseudomonas mendocina (strain ymp) (Pseudomonas mendocina), this protein is L-lactate dehydrogenase.